Consider the following 404-residue polypeptide: Cysteine desulfurase IscS (404 aa).

Pyridoxal 5'-phosphate is bound by residues 75 to 76 (AT), asparagine 155, glutamine 183, and 203 to 205 (SAH). An N6-(pyridoxal phosphate)lysine modification is found at lysine 206. Threonine 243 contacts pyridoxal 5'-phosphate. Cysteine 328 serves as the catalytic Cysteine persulfide intermediate. Cysteine 328 is a [2Fe-2S] cluster binding site.

Belongs to the class-V pyridoxal-phosphate-dependent aminotransferase family. NifS/IscS subfamily. As to quaternary structure, homodimer. Forms a heterotetramer with IscU, interacts with other sulfur acceptors. Pyridoxal 5'-phosphate serves as cofactor.

It localises to the cytoplasm. The catalysed reaction is (sulfur carrier)-H + L-cysteine = (sulfur carrier)-SH + L-alanine. Its pathway is cofactor biosynthesis; iron-sulfur cluster biosynthesis. Its function is as follows. Master enzyme that delivers sulfur to a number of partners involved in Fe-S cluster assembly, tRNA modification or cofactor biosynthesis. Catalyzes the removal of elemental sulfur atoms from cysteine to produce alanine. Functions as a sulfur delivery protein for Fe-S cluster synthesis onto IscU, an Fe-S scaffold assembly protein, as well as other S acceptor proteins. The polypeptide is Cysteine desulfurase IscS (Pseudomonas fluorescens (strain Pf0-1)).